A 103-amino-acid polypeptide reads, in one-letter code: SLC35A4 upstream open reading frame protein (103 aa).

Residues 62–84 (ASAVLGFAVGTCTGIYAAQAYAV) form a helical membrane-spanning segment.

It localises to the mitochondrion inner membrane. In terms of biological role, required to maintain cellular respiration. In Homo sapiens (Human), this protein is SLC35A4 upstream open reading frame protein.